We begin with the raw amino-acid sequence, 1288 residues long: SH3 domain and tetratricopeptide repeat-containing protein 2 (1288 aa).

2 consecutive SH3 domains span residues 176-240 and 268-331; these read EGHF…PLPL and IGRG…PDSY. The segment covering 386–395 has biased composition (polar residues); the sequence is NPPNDLSASQ. Disordered regions lie at residues 386–405 and 410–444; these read NPPN…VRPG and EHQA…LPEP. 8 TPR repeats span residues 528 to 561, 757 to 790, 836 to 869, 1001 to 1037, 1084 to 1118, 1119 to 1152, 1166 to 1199, and 1210 to 1244; these read ARLC…LNGA, RALC…GQLL, GVIY…AQEV, GRLL…FIDL, LKLY…LARR, LKAV…ATLA, LVAF…CPPW, and AKVY…AVLL.

In terms of tissue distribution, strongly expressed in brain and spinal cord. Expressed at equal level in spinal cord and sciatic nerve. Weakly expressed in striated muscle.

This chain is SH3 domain and tetratricopeptide repeat-containing protein 2 (SH3TC2), found in Homo sapiens (Human).